A 1639-amino-acid chain; its full sequence is Peroxide stress-activated histidine kinase mak1 (1639 aa).

Positions 38 to 49 (SFTNSQNSSVGS) are enriched in polar residues. Positions 38–76 (SFTNSQNSSVGSVHSPILESPTSLNRQHRNSFSFNNVSS) are disordered. Low complexity predominate over residues 67–76 (NSFSFNNVSS). The 71-residue stretch at 716–786 (PFPLLKVIID…NDWKSSLFSG (71 aa)) folds into the PAS 1 domain. Residues 789–841 (FYHEIRLQRFDNVYRYFICRAVPLRDCTGSVLHFFGTMTDVHDQKLAERELQK) form the PAC 1 domain. Residues 848 to 920 (NENSYRSLAE…ESLEGTFNNQ (73 aa)) enclose the PAS 2 domain. Residues 929–982 (FAAEIRFRSTDGHYRWHLVKSVCVNNSADTSTNLWLGTCTDIHDHKMLEEKLQE) form the PAC 2 domain. Residues 1000–1223 (NMSHEIRTPL…RFMWTATFTM (224 aa)) form the Histidine kinase domain. Residue histidine 1003 is modified to Phosphohistidine; by autocatalysis. A Response regulatory domain is found at 1507 to 1629 (SVLLAEDNII…HLSLIISGIL (123 aa)). Residue aspartate 1559 is modified to 4-aspartylphosphate.

Its subcellular location is the cytoplasm. The enzyme catalyses ATP + protein L-histidine = ADP + protein N-phospho-L-histidine.. Its function is as follows. Involved in the control of the SAPK-dependent transcriptional response to peroxide stress. Also has a role in G2/M regulation. The chain is Peroxide stress-activated histidine kinase mak1 (mak1) from Schizosaccharomyces pombe (strain 972 / ATCC 24843) (Fission yeast).